Here is a 314-residue protein sequence, read N- to C-terminus: Olfactory receptor 4Q2 (314 aa).

At 1 to 26 (MDKNQTEVMREFFLSGFSQTPSIEAG) the chain is on the extracellular side. N-linked (GlcNAc...) asparagine glycosylation is present at Asn4. The helical transmembrane segment at 27-47 (LFVLFLFFYMSIWVGNVLIMV) threads the bilayer. At 48–61 (TVASDKYLNSSPMY) the chain is on the cytoplasmic side. The chain crosses the membrane as a helical span at residues 62 to 84 (FLLGNLSFLDLCYSTVTTPKLLA). The Extracellular portion of the chain corresponds to 85 to 98 (DFFNHEKLISYDQC). Cys98 and Cys181 are oxidised to a cystine. A helical membrane pass occupies residues 99–119 (IVQLFFLHFVGAAEMFLLTVM). At 120-142 (AYDRYVAICRPLHYTTVMSRGLC) the chain is on the cytoplasmic side. Residues 143-163 (CVLVAASWMGGFVHSTVQTIL) form a helical membrane-spanning segment. Over 164 to 196 (TVHLPFCGPNQVENTFFCDVPPVIKLACADTFV) the chain is Extracellular. The helical transmembrane segment at 197–217 (IELLMVSNSGLISTISFVVLI) threads the bilayer. Topologically, residues 218–236 (SSYTTILVKIRSKEGRRKA) are cytoplasmic. The chain crosses the membrane as a helical span at residues 237–257 (LSTCASHLMVVTLFFGPCIFI). Residues 258–268 (YARPFSTFSVD) lie on the Extracellular side of the membrane. The chain crosses the membrane as a helical span at residues 269-289 (KMVSVLYNVITPMLNPLIYTL). Residues 290 to 314 (RNKEVKSAMQKLWVRNGLTWKKQET) are Cytoplasmic-facing.

The protein belongs to the G-protein coupled receptor 1 family.

It is found in the cell membrane. In terms of biological role, odorant receptor. This chain is Olfactory receptor 4Q2 (OR4Q2), found in Homo sapiens (Human).